A 246-amino-acid chain; its full sequence is 3-deoxy-manno-octulosonate cytidylyltransferase (246 aa).

Belongs to the KdsB family.

It is found in the cytoplasm. It carries out the reaction 3-deoxy-alpha-D-manno-oct-2-ulosonate + CTP = CMP-3-deoxy-beta-D-manno-octulosonate + diphosphate. It functions in the pathway nucleotide-sugar biosynthesis; CMP-3-deoxy-D-manno-octulosonate biosynthesis; CMP-3-deoxy-D-manno-octulosonate from 3-deoxy-D-manno-octulosonate and CTP: step 1/1. It participates in bacterial outer membrane biogenesis; lipopolysaccharide biosynthesis. Functionally, activates KDO (a required 8-carbon sugar) for incorporation into bacterial lipopolysaccharide in Gram-negative bacteria. This Rickettsia peacockii (strain Rustic) protein is 3-deoxy-manno-octulosonate cytidylyltransferase.